Consider the following 525-residue polypeptide: Probable histidine ammonia-lyase (525 aa).

Residues 145-147 (ASG) constitute a cross-link (5-imidazolinone (Ala-Gly)). Ser-146 bears the 2,3-didehydroalanine (Ser) mark.

The protein belongs to the PAL/histidase family. Post-translationally, contains an active site 4-methylidene-imidazol-5-one (MIO), which is formed autocatalytically by cyclization and dehydration of residues Ala-Ser-Gly.

It localises to the cytoplasm. The enzyme catalyses L-histidine = trans-urocanate + NH4(+). The protein operates within amino-acid degradation; L-histidine degradation into L-glutamate; N-formimidoyl-L-glutamate from L-histidine: step 1/3. In Halobacterium salinarum (strain ATCC 29341 / DSM 671 / R1), this protein is Probable histidine ammonia-lyase.